The sequence spans 499 residues: MANDSSTDGRFSEKLRVPEALTFDDVLLRPAESRVEPDDADVATRVSTNVELEVPVLSAAMDTVTESRLAIAMAREGGLGVLHQNMDTDRVVAEVERVKRADELVIDRENVVTAAPEQTVEAVDEMMDRSDVSGAPVVDDDDTVRGIISATDIRPYLEVGESDAVREAMTDEVITAPEDITARDALELMYEHKIERVPIVNDEQHLVGLVTMQGILERREHGSAARDQNGRLRVGVAVGPFDTERATAVDEAGADVLFIDCAHAHNLNVIDSAREIKASVDADVVVGNVGTREAAEAVVDFADGIKVGIGPGSICTTRVVTGSGMPQITAVSQVADVAAPAGVPVIADGGIRYSGDAAKAIAAGADAVMLGSYFAGTDEAPGRVITMNGKKYKQYRGMGSVGAMQSGGSDRYLKDDDEDEEYVPEGVEAATPYKGSLASELHQLVGGIQSGMGYVGAESIPAFKADAEFVRVSAAGQTEGHPHDVMITDEAPNYSPQGE.

CBS domains lie at 106–165 (IDRE…SDAV) and 169–225 (MTDE…GSAA). Residues D260 and 308–310 (GIG) each bind NAD(+). K(+)-binding residues include G310 and G312. Position 313 (S313) interacts with IMP. C315 is a K(+) binding site. The active-site Thioimidate intermediate is C315. Residues 348–350 (DGG), 371–372 (GS), and 395–399 (YRGMG) each bind IMP. R411 functions as the Proton acceptor in the catalytic mechanism. E425 is an IMP binding site. 3 residues coordinate K(+): E479, G480, and H481. Residues 480–499 (GHPHDVMITDEAPNYSPQGE) form a disordered region.

It belongs to the IMPDH/GMPR family. In terms of assembly, homotetramer. It depends on K(+) as a cofactor.

It catalyses the reaction IMP + NAD(+) + H2O = XMP + NADH + H(+). The protein operates within purine metabolism; XMP biosynthesis via de novo pathway; XMP from IMP: step 1/1. With respect to regulation, mycophenolic acid (MPA) is a non-competitive inhibitor that prevents formation of the closed enzyme conformation by binding to the same site as the amobile flap. In contrast, mizoribine monophosphate (MZP) is a competitive inhibitor that induces the closed conformation. MPA is a potent inhibitor of mammalian IMPDHs but a poor inhibitor of the bacterial enzymes. MZP is a more potent inhibitor of bacterial IMPDH. Functionally, catalyzes the conversion of inosine 5'-phosphate (IMP) to xanthosine 5'-phosphate (XMP), the first committed and rate-limiting step in the de novo synthesis of guanine nucleotides, and therefore plays an important role in the regulation of cell growth. The chain is Inosine-5'-monophosphate dehydrogenase from Halobacterium salinarum (strain ATCC 700922 / JCM 11081 / NRC-1) (Halobacterium halobium).